The sequence spans 521 residues: Phosphoethanolamine transferase EptA (521 aa).

The next 6 membrane-spanning stretches (helical) occupy residues 18–38, 47–67, 79–99, 118–138, 150–170, and 182–202; these read AGLLYSLIFGVLYHFPLFVYV, FIAMMVVVLFCVNGALFLALG, IVFSLLNSVAFYFISAYKVFL, FLSVKLFVFIVVFGVLPGYVI, APFLAILALVFIFIASALANT, and FIGGLILPFAYSVNAFRVSAL.

The protein belongs to the phosphoethanolamine transferase family. EptA subfamily.

The protein resides in the cell inner membrane. It functions in the pathway bacterial outer membrane biogenesis; LPS lipid A biosynthesis. Functionally, probably catalyzes the addition of a phosphoethanolamine moiety to the dephosphorylated 1-position of the disaccharide backbone of lipid A. Lipid A that is 1-phosphorylated is not a substrate for this enzyme. This Helicobacter pylori (strain ATCC 700392 / 26695) (Campylobacter pylori) protein is Phosphoethanolamine transferase EptA.